The following is a 102-amino-acid chain: Large ribosomal subunit protein bL36m (102 aa).

Belongs to the bacterial ribosomal protein bL36 family. As to quaternary structure, component of the mitochondrial ribosome large subunit (39S) which comprises a 16S rRNA and about 50 distinct proteins.

The protein localises to the mitochondrion. This is Large ribosomal subunit protein bL36m (Mrpl36) from Mus musculus (Mouse).